Here is a 142-residue protein sequence, read N- to C-terminus: Putative transmembrane protein INAFM1 (142 aa).

Gly residues predominate over residues M1 to L19. Residues M1 to G22 are disordered. A helical membrane pass occupies residues Y36–V56. Disordered stretches follow at residues P61–P83 and V99–G142. Over residues P64–P83 the composition is skewed to pro residues. A compositionally biased stretch (low complexity) spans V99–L111. Over residues Y117–G142 the composition is skewed to basic and acidic residues.

It localises to the membrane. This chain is Putative transmembrane protein INAFM1, found in Homo sapiens (Human).